The following is a 295-amino-acid chain: ATP synthase gamma chain (295 aa).

Belongs to the ATPase gamma chain family. In terms of assembly, F-type ATPases have 2 components, CF(1) - the catalytic core - and CF(0) - the membrane proton channel. CF(1) has five subunits: alpha(3), beta(3), gamma(1), delta(1), epsilon(1). CF(0) has three main subunits: a, b and c.

It is found in the cell inner membrane. Produces ATP from ADP in the presence of a proton gradient across the membrane. The gamma chain is believed to be important in regulating ATPase activity and the flow of protons through the CF(0) complex. In Sulfurovum sp. (strain NBC37-1), this protein is ATP synthase gamma chain.